Reading from the N-terminus, the 80-residue chain is Serine palmitoyltransferase small subunit A-B (80 aa).

Residues 1–21 (MKVSCEDVNGPRSSLGRAWNH) are Cytoplasmic-facing. A helical membrane pass occupies residues 22–38 (VSWLYYQYLLVTALYML). Residues 39–43 (EPWER) are Lumenal-facing. A helical membrane pass occupies residues 44-66 (TVFNSMLVSIVGMALYTGYIFMP). Over 67 to 80 (QHILAILHYFEIVQ) the chain is Cytoplasmic.

The protein belongs to the SPTSS family. SPTSSA subfamily. Component of the serine palmitoyltransferase (SPT) complex, which is composed of SPTLC1, SPTLC2 or SPTLC3 and SPTSSA or SPTSSB. The heterodimer consisting of SPTLC1 and SPTLC2/SPTLC3 forms the catalytic core of the enzyme, while SPTSSA or SPTSSB subunits determine substrate specificity. SPT also interacts with ORMDL proteins, especially ORMDL3, which negatively regulate SPT activity in the presence of ceramides.

Its subcellular location is the endoplasmic reticulum membrane. It functions in the pathway lipid metabolism; sphingolipid metabolism. Functionally, component of the serine palmitoyltransferase multisubunit enzyme (SPT) that catalyzes the initial and rate-limiting step in sphingolipid biosynthesis by condensing L-serine and activated acyl-CoA (most commonly palmitoyl-CoA) to form long-chain bases. The SPT complex is composed of SPTLC1, SPTLC2 or SPTLC3 and SPTSSA or SPTSSB. Within this complex, the heterodimer consisting of SPTLC1 and SPTLC2/SPTLC3 forms the catalytic core. Within the SPT complex, SPTSSA stimulates the catalytic activity and plays a role in substrate specificity, which depends upon the overall complex composition. The SPTLC1-SPTLC2-SPTSSA complex shows a strong preference for C16-CoA substrate, while the SPTLC1-SPTLC3-SPTSSA isozyme uses both C14-CoA and C16-CoA as substrates, with a slight preference for C14-CoA. Independently of its action as a SPT component, may be involved in MBOAT7 localization to mitochondria-associated membranes, a membrane bridge between the endoplasmic reticulum and mitochondria, may hence affect MBOAT7-catalyzed incorporation of arachidonic acid into phosphatidylinositol. The sequence is that of Serine palmitoyltransferase small subunit A-B (sptssa-b) from Xenopus laevis (African clawed frog).